Consider the following 381-residue polypeptide: Cell division protein FtsZ (381 aa).

The segment at 1-25 (MKFINDAIKESEKREKPSSSSMNSE) is disordered. The span at 7–17 (AIKESEKREKP) shows a compositional bias: basic and acidic residues. GTP-binding positions include 48–52 (GAGNN), 135–137 (GTG), Glu-166, Arg-170, and Asp-213.

This sequence belongs to the FtsZ family. As to quaternary structure, homodimer. Polymerizes to form a dynamic ring structure in a strictly GTP-dependent manner. Interacts directly with several other division proteins.

The protein resides in the cytoplasm. Its function is as follows. Essential cell division protein that forms a contractile ring structure (Z ring) at the future cell division site. The regulation of the ring assembly controls the timing and the location of cell division. One of the functions of the FtsZ ring is to recruit other cell division proteins to the septum to produce a new cell wall between the dividing cells. Binds GTP and shows GTPase activity. In Methanothermobacter thermautotrophicus (strain ATCC 29096 / DSM 1053 / JCM 10044 / NBRC 100330 / Delta H) (Methanobacterium thermoautotrophicum), this protein is Cell division protein FtsZ.